The chain runs to 543 residues: EH domain-containing protein 2 (543 aa).

Phosphoserine occurs at positions 3 and 44. The 232-residue stretch at 55-286 (FDGKPMVLVA…DLFRDIQGLP (232 aa)) folds into the Dynamin-type G domain. The tract at residues 65 to 72 (GQYSTGKT) is G1 motif. ATP is bound at residue 65 to 72 (GQYSTGKT). A G2 motif region spans residues 91–92 (EP). The G3 motif stretch occupies residues 153–156 (DTPG). Residues 219 to 222 (NKAD) are G4 motif. Residue Lys220 participates in ATP binding. Val243 is a region of interest (G5 motif). ATP is bound at residue Trp258. Residues 320-340 (TVFGKENKKKQLILKLPVIFA) form a mediates membrane-binding region. Residues Ser438, Ser468, Ser470, Ser484, and Ser493 each carry the phosphoserine modification. Positions 449–537 (DKSKYDEIFY…RRLVPPSKRR (89 aa)) constitute an EH domain. The EF-hand domain maps to 481-516 (LPNSVLGRIWKLSDVDRDGMLDDEEFALASHLIEAK). Ca(2+) contacts are provided by Asp494, Asp496, Asp498, Met500, and Glu505. A disordered region spans residues 521–543 (GLPTNLPRRLVPPSKRRQKGSAE). The segment covering 534 to 543 (SKRRQKGSAE) has biased composition (basic residues).

The protein belongs to the TRAFAC class dynamin-like GTPase superfamily. Dynamin/Fzo/YdjA family. EHD subfamily. In terms of assembly, homodimer and homooligomer. Interacts with EHD1. May also interact with EHD3 and EHD4. Interacts with MYOF. Interacts with EHBP1. Interacts with FER1L5 (via second C2 domain). Interacts with CAV1 in a cholesterol-dependent manner. Interacts (via EH domain) with PACSIN2 (via NPF motifs); this interaction probably stabilizes the caveolae. Detected in lung and adipocytes. Detected at lower levels in heart and skeletal muscle.

The protein resides in the cell membrane. It localises to the membrane. The protein localises to the caveola. It is found in the endosome membrane. Its subcellular location is the cytoplasm. The protein resides in the cytosol. With respect to regulation, the very low intrinsic ATPase activity is increased upon interaction with liposomes. In terms of biological role, ATP- and membrane-binding protein that controls membrane reorganization/tubulation upon ATP hydrolysis. Plays a role in membrane trafficking between the plasma membrane and endosomes. Important for the internalization of GLUT4. Required for fusion of myoblasts to skeletal muscle myotubes. Required for normal translocation of FER1L5 to the plasma membrane. Regulates the equilibrium between cell surface-associated and cell surface-dissociated caveolae by constraining caveolae at the cell membrane. This is EH domain-containing protein 2 from Mus musculus (Mouse).